The sequence spans 190 residues: Xanthine phosphoribosyltransferase (190 aa).

Xanthine is bound by residues Leu-20 and Asn-27. 128–132 contacts 5-phospho-alpha-D-ribose 1-diphosphate; the sequence is ANGQA. Xanthine is bound at residue Lys-156.

The protein belongs to the purine/pyrimidine phosphoribosyltransferase family. Xpt subfamily. As to quaternary structure, homodimer.

It is found in the cytoplasm. It carries out the reaction XMP + diphosphate = xanthine + 5-phospho-alpha-D-ribose 1-diphosphate. It functions in the pathway purine metabolism; XMP biosynthesis via salvage pathway; XMP from xanthine: step 1/1. Functionally, converts the preformed base xanthine, a product of nucleic acid breakdown, to xanthosine 5'-monophosphate (XMP), so it can be reused for RNA or DNA synthesis. The sequence is that of Xanthine phosphoribosyltransferase from Pediococcus pentosaceus (strain ATCC 25745 / CCUG 21536 / LMG 10740 / 183-1w).